The following is a 354-amino-acid chain: Holliday junction branch migration complex subunit RuvB (354 aa).

Residues 1 to 24 (MSIQTDDFAPVPPPKRVVSAAPTS) are disordered. A large ATPase domain (RuvB-L) region spans residues 5–195 (TDDFAPVPPP…FGIVARLEFY (191 aa)). ATP is bound by residues Leu-34, Arg-35, Gly-76, Lys-79, Thr-80, Thr-81, 142-144 (EDY), Arg-185, Tyr-195, and Arg-232. Thr-80 is a binding site for Mg(2+). The small ATPAse domain (RuvB-S) stretch occupies residues 196–266 (TPEELSRIVT…IAQRALAMLD (71 aa)). The interval 269-354 (PQGFDVMDRK…RQHTDLFGPA (86 aa)) is head domain (RuvB-H). DNA-binding residues include Arg-324 and Arg-329.

It belongs to the RuvB family. Homohexamer. Forms an RuvA(8)-RuvB(12)-Holliday junction (HJ) complex. HJ DNA is sandwiched between 2 RuvA tetramers; dsDNA enters through RuvA and exits via RuvB. An RuvB hexamer assembles on each DNA strand where it exits the tetramer. Each RuvB hexamer is contacted by two RuvA subunits (via domain III) on 2 adjacent RuvB subunits; this complex drives branch migration. In the full resolvosome a probable DNA-RuvA(4)-RuvB(12)-RuvC(2) complex forms which resolves the HJ.

It is found in the cytoplasm. The enzyme catalyses ATP + H2O = ADP + phosphate + H(+). Its function is as follows. The RuvA-RuvB-RuvC complex processes Holliday junction (HJ) DNA during genetic recombination and DNA repair, while the RuvA-RuvB complex plays an important role in the rescue of blocked DNA replication forks via replication fork reversal (RFR). RuvA specifically binds to HJ cruciform DNA, conferring on it an open structure. The RuvB hexamer acts as an ATP-dependent pump, pulling dsDNA into and through the RuvAB complex. RuvB forms 2 homohexamers on either side of HJ DNA bound by 1 or 2 RuvA tetramers; 4 subunits per hexamer contact DNA at a time. Coordinated motions by a converter formed by DNA-disengaged RuvB subunits stimulates ATP hydrolysis and nucleotide exchange. Immobilization of the converter enables RuvB to convert the ATP-contained energy into a lever motion, pulling 2 nucleotides of DNA out of the RuvA tetramer per ATP hydrolyzed, thus driving DNA branch migration. The RuvB motors rotate together with the DNA substrate, which together with the progressing nucleotide cycle form the mechanistic basis for DNA recombination by continuous HJ branch migration. Branch migration allows RuvC to scan DNA until it finds its consensus sequence, where it cleaves and resolves cruciform DNA. This is Holliday junction branch migration complex subunit RuvB from Paracidovorax citrulli (strain AAC00-1) (Acidovorax citrulli).